We begin with the raw amino-acid sequence, 184 residues long: MEADDHVSLFRFPFKIPTFRGIRKGGVYLSGALYALGFWIFLDAVLYSRYSNASDVHVTFIDWIPFLCSTLGTLIVNSIEKNRLLQGALSSDGGAFGSGVGDLDSSMAWQARTVLFFGFALLAGGLSGSIVVLIIKFLVKDYNTYPTLGMGVNNVLGNVCILLSCVVLWIAQNVEDEYSYSLTL.

Met1 carries the N-acetylmethionine modification. Ser8 is modified (phosphoserine). A helical transmembrane segment spans residues 26–46 (GVYLSGALYALGFWIFLDAVL). N-linked (GlcNAc...) asparagine glycosylation occurs at Asn52. Transmembrane regions (helical) follow at residues 56 to 76 (VHVT…TLIV), 115 to 135 (LFFG…VLII), and 150 to 170 (MGVN…VLWI).

It belongs to the UPF0220 family.

It localises to the vacuole membrane. It is found in the mitochondrion. In terms of biological role, involved in vacuolar protein sorting. The chain is Vacuolar protein sorting-associated protein 68 (VPS68) from Saccharomyces cerevisiae (strain ATCC 204508 / S288c) (Baker's yeast).